We begin with the raw amino-acid sequence, 85 residues long: MAPPLSPGSRVLIALIRVYQRLISPLLGPHCRFTPTCSSYGIEALRRFGVIKGSWLTVKRVLKCHPLHPGGDDPVPPGPFNTREH.

The protein belongs to the UPF0161 family.

It is found in the cell inner membrane. Its function is as follows. Could be involved in insertion of integral membrane proteins into the membrane. The protein is Putative membrane protein insertion efficiency factor of Escherichia coli O157:H7.